Consider the following 436-residue polypeptide: 3-ketoacyl-CoA thiolase (436 aa).

C99 serves as the catalytic Acyl-thioester intermediate. Residues H392 and C422 each act as proton acceptor in the active site.

This sequence belongs to the thiolase-like superfamily. Thiolase family. As to quaternary structure, heterotetramer of two alpha chains (FadJ) and two beta chains (FadI).

It is found in the cytoplasm. The catalysed reaction is an acyl-CoA + acetyl-CoA = a 3-oxoacyl-CoA + CoA. Its pathway is lipid metabolism; fatty acid beta-oxidation. In terms of biological role, catalyzes the final step of fatty acid oxidation in which acetyl-CoA is released and the CoA ester of a fatty acid two carbons shorter is formed. This is 3-ketoacyl-CoA thiolase from Salmonella paratyphi B (strain ATCC BAA-1250 / SPB7).